The sequence spans 97 residues: MEALGMIETRGLVALIEASDAMVKAARVKLVGVKQIGGGLCTAMVRGDVAACKAATDAGAAAAQRIGELVSVHVIPRPHGDLEEVFPIGLKGDSSNL.

The 85-residue stretch at alanine 3–proline 87 folds into the BMC domain.

Belongs to the bacterial microcompartments protein family. In terms of assembly, homohexamer with a central pore of up to 8.6 Angstroms diameter. The hexamers pack into a two-dimensional array. Interacts with EutQ.

It is found in the bacterial microcompartment. The protein operates within amine and polyamine degradation; ethanolamine degradation. Probably a major component of the bacterial microcompartment (BMC) shell dedicated to ethanolamine degradation. Each homohexamer has a central pore with an opening of up to 8.6 Angstroms. A positively-charged funnel leads to the pore from each side of the hexamer. The pore probably allows metabolite passage into and out of the BMC. This is Bacterial microcompartment shell protein EutM (eutM) from Escherichia coli O6:H1 (strain CFT073 / ATCC 700928 / UPEC).